The following is a 526-amino-acid chain: Cyclin-L1 (526 aa).

The interval 1-36 is disordered; that stretch reads MASGPHSTATAAAAASSAAPSAGGSSSGTTTTTTTT. Cyclin-like stretches follow at residues 88 to 190 and 203 to 287; these read ELIQ…RVLK and KIIV…ETLR. The segment at 318 to 526 is disordered; the sequence is KGLNPDGTPA…SRSGHGRHRR (209 aa). Thr-325 carries the phosphothreonine modification. Residues Ser-335 and Ser-338 each carry the phosphoserine modification. Glycyl lysine isopeptide (Lys-Gly) (interchain with G-Cter in SUMO2) cross-links involve residues Lys-339 and Lys-347. Residues 342-352 show a composition bias toward basic and acidic residues; it reads SPREVKAEEKS. Residues Ser-352 and Ser-355 each carry the phosphoserine modification. A compositionally biased stretch (basic and acidic residues) spans 361-370; it reads VKKEPEDRQQ. Residue Lys-362 forms a Glycyl lysine isopeptide (Lys-Gly) (interchain with G-Cter in SUMO2) linkage. Ser-374 carries the phosphoserine modification. 4 stretches are compositionally biased toward basic residues: residues 382 to 418, 438 to 452, 460 to 476, and 486 to 498; these read DSKR…RRSR, RRHH…KAKH, SNRH…RSQS, and KKHR…HRDR. Positions 390 to 432 are RS; sequence RSASRSRSRTRSRSRSHTPRRHYNNRRSRSGTYSSRSRSRSRS. Ser-445 is subject to Phosphoserine. The span at 499 to 508 shows a compositional bias: basic and acidic residues; that stretch reads RERSRSFERS. Positions 509–526 are enriched in basic residues; sequence HKSKHHGGSRSGHGRHRR.

This sequence belongs to the cyclin family. Cyclin L subfamily. As to quaternary structure, (Microbial infection) Interacts with human herpes virus 1 (HHV-1) transcriptional regulator ICP22. Interacts with POLR2A via its hyperphosphorylated C-terminal domain (CTD). Interacts with CDK11A, CDK12 and CDK13. Isoforms 1 and 2, but not isoform 3, interact with CDK11B. May form a ternary complex with CDK11B and casein kinase II (CKII). Interacts with pre-mRNA-splicing factors, including at least SRSF1, SRSF2 and SRSF7/SLU7. Widely expressed. Overexpression in primary tumors of head and neck squamous cell carcinomas (HNSCC).

It localises to the nucleus speckle. It is found in the nucleus. The protein localises to the nucleoplasm. Involved in pre-mRNA splicing. Functions in association with cyclin-dependent kinases (CDKs). Inhibited by the CDK-specific inhibitor CDKN1A/p21. May play a role in the regulation of RNA polymerase II (pol II). May be a candidate proto-oncogene in head and neck squamous cell carcinomas (HNSCC). This Homo sapiens (Human) protein is Cyclin-L1 (CCNL1).